Here is an 839-residue protein sequence, read N- to C-terminus: Taste receptor type 1 member 2 (839 aa).

The signal sequence occupies residues 1–19 (MGPRAKTICSLFFLLWVLA). Residues 20-566 (EPAENSDFYL…VFLEWHEAPT (547 aa)) are Extracellular-facing. Asn84, Asn248, Asn292, Asn312, Asn368, Asn407, Asn428, Asn487, and Asn527 each carry an N-linked (GlcNAc...) asparagine glycan. Residues 567–587 (IAVALLAALGFLSTLAILVIF) traverse the membrane as a helical segment. At 588 to 602 (WRHFQTPIVRSAGGP) the chain is on the cytoplasmic side. Residues 603–623 (MCFLMLTLLLVAYMVVPVYVG) form a helical membrane-spanning segment. The Extracellular portion of the chain corresponds to 624–635 (PPKVSTCLCRQA). A helical transmembrane segment spans residues 636–656 (LFPLCFTICISCIAVRSFQIV). Over 657–681 (CAFKMASRFPRAYSYWVRYQGPYVS) the chain is Cytoplasmic. The helical transmembrane segment at 682 to 702 (MAFITVLKMVIVVIGMLATGL) threads the bilayer. Over 703-727 (SPTTRTDPDDPKITIVSCNPNYRNS) the chain is Extracellular. A helical transmembrane segment spans residues 728–748 (LLFNTSLDLLLSVVGFSFAYM). The Cytoplasmic portion of the chain corresponds to 749–760 (GKELPTNYNEAK). A helical transmembrane segment spans residues 761 to 781 (FITLSMTFYFTSSVSLCTFMS). The Extracellular segment spans residues 782 to 784 (AYS). A helical membrane pass occupies residues 785–805 (GVLVTIVDLLVTVLNLLAISL). The Cytoplasmic portion of the chain corresponds to 806 to 839 (GYFGPKCYMILFYPERNTSAYFNSMIQGYTMRRD).

This sequence belongs to the G-protein coupled receptor 3 family. TAS1R subfamily. In terms of assembly, forms heterodimers with TAS1R3.

The protein resides in the cell membrane. Putative taste receptor. TAS1R2/TAS1R3 recognizes diverse natural and synthetic sweeteners. The protein is Taste receptor type 1 member 2 (TAS1R2) of Pan troglodytes (Chimpanzee).